A 102-amino-acid chain; its full sequence is Protamine-2 (102 aa).

The segment at 1 to 102 (MVRYRVRSPS…RTRRRTCRKH (102 aa)) is disordered. Residues S8, S10, and S37 each carry the phosphoserine modification. Positions 39–48 (EHVEVYERTH) are enriched in basic and acidic residues. The span at 49 to 102 (GHSHYRRRHCSRRRLRRIHRQQHRSCRRRKRRSCRHRRRHRRGCRTRRRTCRKH) shows a compositional bias: basic residues.

Belongs to the protamine P2 family. In terms of assembly, interacts with TDRP. Proteolytic processing into mature chains is required for histone eviction during spermatogenesis. Transition proteins (TNP1 and TNP2) are required for processing. Testis.

It is found in the nucleus. The protein localises to the chromosome. Protamines substitute for histones in the chromatin of sperm during the haploid phase of spermatogenesis. They compact sperm DNA into a highly condensed, stable and inactive complex. The chain is Protamine-2 (PRM2) from Pan paniscus (Pygmy chimpanzee).